Here is a 341-residue protein sequence, read N- to C-terminus: Putative [LysW]-lysine/[LysW]-ornithine hydrolase (341 aa).

Residue His62 coordinates Zn(2+). Asp64 is an active-site residue. Asp86 contacts Zn(2+). The Proton acceptor role is filled by Glu115. Residues Glu116, Glu140, and His309 each coordinate Zn(2+).

This sequence belongs to the peptidase M20A family. LysK subfamily. The cofactor is Zn(2+). Co(2+) serves as cofactor.

The protein localises to the cytoplasm. It catalyses the reaction [amino-group carrier protein]-C-terminal-gamma-(L-lysyl)-L-glutamate + H2O = [amino-group carrier protein]-C-terminal-L-glutamate + L-lysine. It carries out the reaction [amino-group carrier protein]-C-terminal-gamma-(L-ornithyl)-L-glutamate + H2O = [amino-group carrier protein]-C-terminal-L-glutamate + L-ornithine. Its pathway is amino-acid biosynthesis; L-lysine biosynthesis via AAA pathway; L-lysine from L-alpha-aminoadipate (Thermus route): step 5/5. The protein operates within amino-acid biosynthesis; L-arginine biosynthesis. In terms of biological role, catalyzes the release of L-lysine from [LysW]-gamma-L-lysine and the release of L-ornithine from [LysW]-L-ornithine. The polypeptide is Putative [LysW]-lysine/[LysW]-ornithine hydrolase (Pyrobaculum aerophilum (strain ATCC 51768 / DSM 7523 / JCM 9630 / CIP 104966 / NBRC 100827 / IM2)).